Reading from the N-terminus, the 606-residue chain is Kelch repeat and BTB domain-containing protein 8 (606 aa).

Residues 55 to 123 (TDIVVQVDHG…AYTSRVQLTE (69 aa)) enclose the BTB domain. In terms of domain architecture, BACK spans 158-258 (CIGVFSFADH…PLMEETFVEQ (101 aa)). Kelch repeat units lie at residues 342 to 396 (ELYI…HCCG), 397 to 447 (KLYA…EYKD), 449 to 487 (IYIL…VYKD), 488 to 534 (SIYY…KLVV), and 546 to 593 (TQVS…FECA).

The protein belongs to the KBTBD8 family. Component of the BCR(KBTBD8) E3 ubiquitin ligase complex.

It localises to the cytoplasm. The protein localises to the cytoskeleton. It is found in the spindle. Its subcellular location is the golgi apparatus. In terms of biological role, substrate-specific adapter of a BCR (BTB-CUL3-RBX1) E3 ubiquitin ligase complex that acts as a regulator of neural crest specification. The BCR(KBTBD8) complex acts by mediating monoubiquitination of target proteins. This chain is Kelch repeat and BTB domain-containing protein 8 (kbtbd8), found in Xenopus tropicalis (Western clawed frog).